We begin with the raw amino-acid sequence, 317 residues long: Cyclin-dependent kinase 1 (317 aa).

Positions 7 to 292 (YQRQEKVGEG…AKRALIHPYF (286 aa)) constitute a Protein kinase domain. Residues 13–21 (VGEGTYGVV) and Lys37 each bind ATP. A Phosphothreonine modification is found at Thr17. At Tyr18 the chain carries Phosphotyrosine; by SWE1. The Proton acceptor role is filled by Asp133. Residue Thr166 is modified to Phosphothreonine; by CAK. The interval 296 to 317 (DDRDHNNYNEDNIGIDKHQNMQ) is disordered.

It belongs to the protein kinase superfamily. CMGC Ser/Thr protein kinase family. CDC2/CDKX subfamily. As to quaternary structure, forms several complexes with cyclins CCN1, CLB2, CLN3, and HGC1. The CDC28-CCN1 complex associates with septin CDC11 upon hyphal induction. Interacts with IQG1, RFA2, and HSP90. In terms of processing, phosphorylated at Tyr-18 by SWE1 in a cell cycle-dependent manner. Yeast-form and hyphal cells display similar dynamics of phosphorylation and dephosphorylation of Tyr-18. Tyr-18 phosphorylation leads to inhibition of CDC28 kinase activity.

The catalysed reaction is L-seryl-[protein] + ATP = O-phospho-L-seryl-[protein] + ADP + H(+). It carries out the reaction L-threonyl-[protein] + ATP = O-phospho-L-threonyl-[protein] + ADP + H(+). Phosphorylation at Thr-17 or Tyr-18 inactivates the enzyme, while phosphorylation at Thr-166 activates it. Cyclin-dependent kinase that acts as a master regulator of the mitotic and meiotic cell cycles. May drive the G1-S transition. Plays a role in mitotic exit. Plays a role in the expression of morphology-related transcription factors, and especially hyphae-specific genes. Binds distinct cyclin subunits as cells progress through the division cycle or flamentous growth. The CDC28-CLB2 complex regulates cytokinesis partly by phosphorylating the actomyosin ring component IQG1. The CDC28-CLN3 complex phosphorylates SLA1 which regulates cortical actin patch dynamics. The CDC28-CCN1 complex phosphorylates CDC11 and SEC2 upon induction of filamentous growth. The CDC28-HGC1 complex also phosphorylates SEC2 and maintains CDC11 phosphorylation throughout hyphal growth. Moreover, the CDC28-HGC1 complex phosphorylates and prevents RGA2 from localizing to hyphal tips, leading to localized CDC42 activation for hyphal extension. CDC28-HGC1 phosphorylation of EFG1 represses cell separation genes during hyphal growth. Additional substrates for CDC28 are RFA2 in G1-phase; MOB2, which is required for the maintenance of polarisome components and for inhibition of cell separation in hyphae; and GIN4 to regulate its association to SEP7 and subsequent septin ring assembly. This chain is Cyclin-dependent kinase 1, found in Candida albicans (strain SC5314 / ATCC MYA-2876) (Yeast).